A 382-amino-acid polypeptide reads, in one-letter code: Beta-lactamase CMY-1 (382 aa).

The first 23 residues, 1–23 (MQQRQSILWGAVATLMWAGLAHA), serve as a signal peptide directing secretion. The Acyl-ester intermediate role is filled by Ser-88. Ser-88, Gln-144, Tyr-174, Asn-176, and Asn-363 together coordinate a beta-lactam.

The protein belongs to the class-C beta-lactamase family.

It catalyses the reaction a beta-lactam + H2O = a substituted beta-amino acid. Inhibited by the beta-lactamase-blocking agent sulbactam. Its function is as follows. Class C beta-lactamase which confers resistance to penicillins and cephalosporins. Has benzylpenicillin- and cefalotin-hydrolyzing activities. Has weak cefuroxime, cefotaxime, cefoxitin, imipenem and oxacillin-hydrolyzing activities. The sequence is that of Beta-lactamase CMY-1 from Klebsiella pneumoniae.